The primary structure comprises 158 residues: 2-C-methyl-D-erythritol 2,4-cyclodiphosphate synthase (158 aa).

Residues D9 and H11 each coordinate a divalent metal cation. Residues 9–11 (DVH) and 35–36 (HS) contribute to the 4-CDP-2-C-methyl-D-erythritol 2-phosphate site. A divalent metal cation is bound at residue H43. 4-CDP-2-C-methyl-D-erythritol 2-phosphate contacts are provided by residues 57–59 (DIG), 62–66 (FPDTD), 101–107 (AQRPKMA), 133–136 (TTTE), F140, and R143.

The protein belongs to the IspF family. Homotrimer. A divalent metal cation serves as cofactor.

The catalysed reaction is 4-CDP-2-C-methyl-D-erythritol 2-phosphate = 2-C-methyl-D-erythritol 2,4-cyclic diphosphate + CMP. Its pathway is isoprenoid biosynthesis; isopentenyl diphosphate biosynthesis via DXP pathway; isopentenyl diphosphate from 1-deoxy-D-xylulose 5-phosphate: step 4/6. Functionally, involved in the biosynthesis of isopentenyl diphosphate (IPP) and dimethylallyl diphosphate (DMAPP), two major building blocks of isoprenoid compounds. Catalyzes the conversion of 4-diphosphocytidyl-2-C-methyl-D-erythritol 2-phosphate (CDP-ME2P) to 2-C-methyl-D-erythritol 2,4-cyclodiphosphate (ME-CPP) with a corresponding release of cytidine 5-monophosphate (CMP). This Lysinibacillus sphaericus (strain C3-41) protein is 2-C-methyl-D-erythritol 2,4-cyclodiphosphate synthase.